Here is a 545-residue protein sequence, read N- to C-terminus: MMGHRPVLVLSQNTKRESGRKVQSGNINAAKTIADIIRTCLGPKSMMKMLLDPMGGIVMTNDGNAILREIQVQHPAAKSMIEISRTQDEEVGDGTTSVIILAGEMLSVAEHFLEQQMHPTVVISAYRMALDDMVSTLKKISTPVDVNNRDMMLNIINSSITTKVISRWSSLACNIALDAVKTVQFEENGRKEIDIKKYARVEKIPGGIIEDSCVLRGVMINKDVTHPRMRRYIKNPRIVLLDSSLEYKKGESQTDIEITREEDFTRILQMEEEYIQQLCEDIIQLKPDVVITEKGISDLAQHYLMRANVTAIRRVRKTDNNRIARACGARIVSRPEELREDDVGTGAGLLEIKKIGDEYFTFITDCKDPKACTILLRGASKEILSEVERNLQDAMQVCRNVLLDPQLVPGGGASEMAVAHALTEKSKAMTGVEQWPYRAVAQALEVIPRTLIQNCGASTIRLLTSLRAKHTQENCETWGVNGETGTLVDMKELGIWEPLAVKLQTYKTAVETAVLLLRIDDIVSGHKKKGDDQNRQTGAPDAGQE.

N-acetylmethionine is present on methionine 1. The tract at residues 1-24 (MMGHRPVLVLSQNTKRESGRKVQS) is disordered. Residue serine 11 is modified to Phosphoserine. Residue lysine 15 forms a Glycyl lysine isopeptide (Lys-Gly) (interchain with G-Cter in SUMO2) linkage. ADP is bound at residue glycine 42. Glycine 42 serves as a coordination point for ATP. Aspartate 93 is a Mg(2+) binding site. ADP-binding residues include glycine 94, threonine 95, threonine 96, serine 97, threonine 162, and lysine 163. 3 residues coordinate ATP: glycine 94, threonine 95, and threonine 96. The residue at position 170 (serine 170) is a Phosphoserine. Lysine 222 carries the post-translational modification N6-acetyllysine. A phosphoserine mark is found at serine 243 and serine 244. Tyrosine 247 carries the post-translational modification Phosphotyrosine. Residues lysine 248 and lysine 249 each participate in a glycyl lysine isopeptide (Lys-Gly) (interchain with G-Cter in SUMO2) cross-link. The residue at position 252 (serine 252) is a Phosphoserine. Cysteines 366 and 372 form a disulfide. Residue lysine 381 forms a Glycyl lysine isopeptide (Lys-Gly) (interchain with G-Cter in SUMO2) linkage. Glycine 411 is a binding site for ADP. An ATP-binding site is contributed by glycine 411. A phosphothreonine mark is found at threonine 430 and threonine 459. The ADP site is built by glycine 482, glutamate 483, glutamate 497, and lysine 502. Glycine 482 serves as a coordination point for ATP. Glutamate 497 serves as a coordination point for ATP. Residues 526–545 (HKKKGDDQNRQTGAPDAGQE) form a disordered region.

It belongs to the TCP-1 chaperonin family. Component of the chaperonin-containing T-complex (TRiC), a hexadecamer composed of two identical back-to-back stacked rings enclosing a protein folding chamber. Each ring is made up of eight different subunits: TCP1/CCT1, CCT2, CCT3, CCT4, CCT5, CCT6A/CCT6, CCT7, CCT8. Interacts with PACRG. Interacts with DNAAF4. Interacts with DLEC1.

It localises to the cytoplasm. The enzyme catalyses ATP + H2O = ADP + phosphate + H(+). In terms of biological role, component of the chaperonin-containing T-complex (TRiC), a molecular chaperone complex that assists the folding of actin, tubulin and other proteins upon ATP hydrolysis. The TRiC complex mediates the folding of WRAP53/TCAB1, thereby regulating telomere maintenance. As part of the TRiC complex may play a role in the assembly of BBSome, a complex involved in ciliogenesis regulating transports vesicles to the cilia. The protein is T-complex protein 1 subunit gamma (Cct3) of Rattus norvegicus (Rat).